The primary structure comprises 271 residues: 3-methyl-2-oxobutanoate hydroxymethyltransferase (271 aa).

2 residues coordinate Mg(2+): Asp42 and Asp86. Residues Asp42–Ser43, Asp86, and Lys116 contribute to the 3-methyl-2-oxobutanoate site. Glu118 contributes to the Mg(2+) binding site. Glu185 functions as the Proton acceptor in the catalytic mechanism.

It belongs to the PanB family. As to quaternary structure, homodecamer; pentamer of dimers. Requires Mg(2+) as cofactor.

Its subcellular location is the cytoplasm. The catalysed reaction is 3-methyl-2-oxobutanoate + (6R)-5,10-methylene-5,6,7,8-tetrahydrofolate + H2O = 2-dehydropantoate + (6S)-5,6,7,8-tetrahydrofolate. It functions in the pathway cofactor biosynthesis; (R)-pantothenate biosynthesis; (R)-pantoate from 3-methyl-2-oxobutanoate: step 1/2. Functionally, catalyzes the reversible reaction in which hydroxymethyl group from 5,10-methylenetetrahydrofolate is transferred onto alpha-ketoisovalerate to form ketopantoate. In Synechococcus sp. (strain CC9605), this protein is 3-methyl-2-oxobutanoate hydroxymethyltransferase.